Here is a 589-residue protein sequence, read N- to C-terminus: Mini-chromosome maintenance complex-binding protein (589 aa).

Positions 163 to 211 (VDEEMTDSMDSSTLEAGRNGSPFKKMKVGEATSSASESQVPQTSGIPPA) are disordered. A compositionally biased stretch (polar residues) spans 193–207 (ATSSASESQVPQTSG).

Belongs to the MCMBP family. Interacts with the MCM complex.

Its subcellular location is the nucleus. Its function is as follows. Associated component of the MCM complex that acts as a regulator of DNA replication. Binds to the MCM complex during late S phase and may act by promoting the disassembly of the MCM complex from chromatin. Required for sister chromatid cohesion. The sequence is that of Mini-chromosome maintenance complex-binding protein (ETG1) from Arabidopsis thaliana (Mouse-ear cress).